Consider the following 258-residue polypeptide: Acetylglutamate kinase (258 aa).

Substrate-binding positions include 44 to 45, Arg-66, and Asn-158; that span reads GG. ATP contacts are provided by residues 181–186 and 209–211; these read DVSGIL and IIT.

It belongs to the acetylglutamate kinase family. ArgB subfamily. In terms of assembly, homodimer.

Its subcellular location is the cytoplasm. The enzyme catalyses N-acetyl-L-glutamate + ATP = N-acetyl-L-glutamyl 5-phosphate + ADP. Its pathway is amino-acid biosynthesis; L-arginine biosynthesis; N(2)-acetyl-L-ornithine from L-glutamate: step 2/4. Functionally, catalyzes the ATP-dependent phosphorylation of N-acetyl-L-glutamate. The polypeptide is Acetylglutamate kinase (Shigella sonnei (strain Ss046)).